Here is a 296-residue protein sequence, read N- to C-terminus: Nucleotide-binding protein Pnuc_1915 (296 aa).

Position 8-15 (8-15 (GISGSGKS)) interacts with ATP. Residue 57-60 (DARR) coordinates GTP.

The protein belongs to the RapZ-like family.

Functionally, displays ATPase and GTPase activities. This chain is Nucleotide-binding protein Pnuc_1915, found in Polynucleobacter asymbioticus (strain DSM 18221 / CIP 109841 / QLW-P1DMWA-1) (Polynucleobacter necessarius subsp. asymbioticus).